Here is a 472-residue protein sequence, read N- to C-terminus: Phosphoenolpyruvate carboxykinase (ATP), glycosomal (472 aa).

ATP is bound at residue glycine 221–threonine 228.

The protein belongs to the phosphoenolpyruvate carboxykinase (ATP) family. In terms of assembly, homodimer.

It localises to the glycosome. It catalyses the reaction oxaloacetate + ATP = phosphoenolpyruvate + ADP + CO2. It participates in carbohydrate biosynthesis; gluconeogenesis. This chain is Phosphoenolpyruvate carboxykinase (ATP), glycosomal (PEPCK), found in Trypanosoma cruzi.